Consider the following 475-residue polypeptide: Ribulose bisphosphate carboxylase large chain (475 aa).

Positions 1–2 are excised as a propeptide; that stretch reads MS. Pro3 carries the post-translational modification N-acetylproline. Lys14 is modified (N6,N6,N6-trimethyllysine). Positions 123 and 173 each coordinate substrate. Residue Lys175 is the Proton acceptor of the active site. Lys177 serves as a coordination point for substrate. 3 residues coordinate Mg(2+): Lys201, Asp203, and Glu204. Residue Lys201 is modified to N6-carboxylysine. His294 acts as the Proton acceptor in catalysis. 3 residues coordinate substrate: Arg295, His327, and Ser379.

This sequence belongs to the RuBisCO large chain family. Type I subfamily. Heterohexadecamer of 8 large chains and 8 small chains; disulfide-linked. The disulfide link is formed within the large subunit homodimers. It depends on Mg(2+) as a cofactor. In terms of processing, the disulfide bond which can form in the large chain dimeric partners within the hexadecamer appears to be associated with oxidative stress and protein turnover.

Its subcellular location is the plastid. It is found in the chloroplast. The enzyme catalyses 2 (2R)-3-phosphoglycerate + 2 H(+) = D-ribulose 1,5-bisphosphate + CO2 + H2O. It catalyses the reaction D-ribulose 1,5-bisphosphate + O2 = 2-phosphoglycolate + (2R)-3-phosphoglycerate + 2 H(+). Functionally, ruBisCO catalyzes two reactions: the carboxylation of D-ribulose 1,5-bisphosphate, the primary event in carbon dioxide fixation, as well as the oxidative fragmentation of the pentose substrate in the photorespiration process. Both reactions occur simultaneously and in competition at the same active site. This Carpinus caroliniana (American hornbeam) protein is Ribulose bisphosphate carboxylase large chain.